The chain runs to 124 residues: Biogenesis of lysosome-related organelles complex 1 subunit CNL1 (124 aa).

The tract at residues 1–20 (MMSENITAVEPQENNDVEAD) is disordered. The stretch at 75–98 (IGMAKDLLQKCDDLEKHYDQLDAV) forms a coiled coil.

Belongs to the BLOC1S4 family. Component of the biogenesis of lysosome-related organelles complex-1 (BLOC-1).

Its subcellular location is the cytoplasm. Functionally, component of the biogenesis of lysosome-related organelles complex-1 (BLOC-1), a complex that is involved in endosomal cargo sorting. This chain is Biogenesis of lysosome-related organelles complex 1 subunit CNL1 (CLN1), found in Kluyveromyces lactis (strain ATCC 8585 / CBS 2359 / DSM 70799 / NBRC 1267 / NRRL Y-1140 / WM37) (Yeast).